The following is a 400-amino-acid chain: Multiphosphoryl transfer protein (400 aa).

Positions 2–142 (LELTTQDIQL…QQIIAIIKGE (141 aa)) constitute a PTS EIIA type-2 domain. His-62 (tele-phosphohistidine intermediate; for EIIA activity) is an active-site residue. At His-62 the chain carries Phosphohistidine; by HPr. Positions 310–400 (AHTATFRIKN…VAINAGLGEG (91 aa)) constitute an HPr domain. His-324 (pros-phosphohistidine intermediate; for HPr activity) is an active-site residue. Residue His-324 is modified to Phosphohistidine; by EI.

The protein localises to the cytoplasm. Functionally, the phosphoenolpyruvate-dependent sugar phosphotransferase system (sugar PTS), a major carbohydrate active transport system, catalyzes the phosphorylation of incoming sugar substrates concomitantly with their translocation across the cell membrane. The enzyme II FruAB PTS system is involved in fructose transport. This is Multiphosphoryl transfer protein from Vibrio cholerae serotype O1 (strain ATCC 39315 / El Tor Inaba N16961).